The following is a 214-amino-acid chain: Nucleoplasmin-2 (214 aa).

The interval 119-214 (ERYEASDLTW…ARAKKPGFKK (96 aa)) is disordered. Over residues 127-155 (TWEEEEEEEGEEEEEEEEDDEDEDADISL) the composition is skewed to acidic residues. The segment at 129-152 (EEEEEEEGEEEEEEEEDDEDEDAD) is acidic tract A2. The short motif at 165 to 180 (KRLVPQKQASVAKKKK) is the Bipartite nuclear localization signal element. Residues 181-197 (LEKEEEEIRASVRDKSP) are compositionally biased toward basic and acidic residues. Residues 198 to 214 (VKKAKATARAKKPGFKK) show a composition bias toward basic residues.

It belongs to the nucleoplasmin family. In terms of assembly, homopentamer, when bound to H2A-H2B dimers only. Homodecamer of two stacked pentamers, when bound to H2A-H2B dimers and H3-H4 tetramers simultaneously.

It is found in the nucleus. In terms of biological role, core histones chaperone involved in chromatin reprogramming, specially during fertilization and early embryonic development. Probably involved in sperm DNA decondensation during fertilization. In Homo sapiens (Human), this protein is Nucleoplasmin-2 (NPM2).